The following is a 282-amino-acid chain: Globin-related protein glb-13 (282 aa).

Residues 1-46 (MGQENSKCPHQSLAEKRYKVERPKTKKVSSGSATERCLSTQSDEKN) form a disordered region. Over residues 13 to 23 (LAEKRYKVERP) the composition is skewed to basic and acidic residues. Polar residues predominate over residues 28-41 (VSSGSATERCLSTQ). The region spanning 100–249 (FLTRRERILL…IISFMRRGFD (150 aa)) is the Globin domain. Heme b is bound by residues H162 and H194.

It belongs to the globin family.

Involved in oxidative stress resistance. The chain is Globin-related protein glb-13 from Caenorhabditis elegans.